Here is a 215-residue protein sequence, read N- to C-terminus: Pyridoxine/pyridoxamine 5'-phosphate oxidase (215 aa).

Substrate is bound by residues 9 to 12 and Lys69; that span reads RRDY. Residues 64–69, 79–80, Lys86, and Gln108 each bind FMN; these read RVLLLK and FT. Substrate-binding residues include Tyr126, Arg130, and Ser134. FMN-binding positions include 143–144 and Trp188; that span reads QS. Residue 194 to 196 coordinates substrate; it reads RLH. Arg198 provides a ligand contact to FMN.

The protein belongs to the pyridoxamine 5'-phosphate oxidase family. In terms of assembly, homodimer. It depends on FMN as a cofactor.

The catalysed reaction is pyridoxamine 5'-phosphate + O2 + H2O = pyridoxal 5'-phosphate + H2O2 + NH4(+). It catalyses the reaction pyridoxine 5'-phosphate + O2 = pyridoxal 5'-phosphate + H2O2. It participates in cofactor metabolism; pyridoxal 5'-phosphate salvage; pyridoxal 5'-phosphate from pyridoxamine 5'-phosphate: step 1/1. It functions in the pathway cofactor metabolism; pyridoxal 5'-phosphate salvage; pyridoxal 5'-phosphate from pyridoxine 5'-phosphate: step 1/1. Catalyzes the oxidation of either pyridoxine 5'-phosphate (PNP) or pyridoxamine 5'-phosphate (PMP) into pyridoxal 5'-phosphate (PLP). The chain is Pyridoxine/pyridoxamine 5'-phosphate oxidase from Pseudomonas syringae pv. tomato (strain ATCC BAA-871 / DC3000).